Consider the following 580-residue polypeptide: tRNA-guanine(15) transglycosylase (580 aa).

The Nucleophile role is filled by D91. Substrate contacts are provided by D126 and A192. Zn(2+)-binding residues include C275, C277, and C280. The region spanning 504–579 (RMRVVVDEDA…LAVKVRRGVE (76 aa)) is the PUA domain.

The protein belongs to the archaeosine tRNA-ribosyltransferase family. The cofactor is Zn(2+).

It carries out the reaction guanosine(15) in tRNA + 7-cyano-7-deazaguanine = 7-cyano-7-carbaguanosine(15) in tRNA + guanine. The protein operates within tRNA modification; archaeosine-tRNA biosynthesis. In terms of biological role, exchanges the guanine residue with 7-cyano-7-deazaguanine (preQ0) at position 15 in the dihydrouridine loop (D-loop) of archaeal tRNAs. The sequence is that of tRNA-guanine(15) transglycosylase from Thermococcus kodakarensis (strain ATCC BAA-918 / JCM 12380 / KOD1) (Pyrococcus kodakaraensis (strain KOD1)).